We begin with the raw amino-acid sequence, 601 residues long: MSSDSMRNIRNFSIIAHVDHGKSTLADRIIQLCGGLQAREMEAQVLDSNPIERERGITIKAQSVSLPYTAKDGQTYHLNFIDTPGHVDFSYEVSRSLAACEGALLVVDAAQGVEAQSVANCYTAVEQGLEVVPVLNKIDLPTADVDRAKAEIEAVIGIDAEDAVAVSAKTGLNIDLVLEAIVHRIPPPKPRDTDKLQALIIDSWFDNYLGVVSLVRVMQGEIKPGSKILVMSTGRTHLVDKVGVFTPKRKELPALGAGEVGWINASIKDVHGAPVGDTLTLAGDPAPHALPGFQEMQPRVFAGLFPVDAEDYPDLREALDKLRLNDAALRFEPESSEAMGFGFRCGFLGMLHMEIVQERLEREYNLDLISTAPTVVYEVLKTDGTVINMDNPAKLPQLNLVQEIREPIIRANVLTPEEYIGNIIKLCEEKRGTQIGINYLGSQVQISYELPMAEVVLDFFDKLKSVSRGYASLDYHFVRFDAGPFVRVDVLINGDKVDALSLIVHRGHADRRGRELCEKMKDLIPRQMFDVAIQAAIGSQIISRSTVKAMRKNVLAKCYGGDVSRKKKLLEKQKEGKKRMKQVGRVEIPQEAFLAVLQMDK.

Positions 7–189 (RNIRNFSIIA…AIVHRIPPPK (183 aa)) constitute a tr-type G domain. Residues 19–24 (DHGKST) and 136–139 (NKID) contribute to the GTP site.

Belongs to the TRAFAC class translation factor GTPase superfamily. Classic translation factor GTPase family. LepA subfamily.

Its subcellular location is the cell inner membrane. The catalysed reaction is GTP + H2O = GDP + phosphate + H(+). Required for accurate and efficient protein synthesis under certain stress conditions. May act as a fidelity factor of the translation reaction, by catalyzing a one-codon backward translocation of tRNAs on improperly translocated ribosomes. Back-translocation proceeds from a post-translocation (POST) complex to a pre-translocation (PRE) complex, thus giving elongation factor G a second chance to translocate the tRNAs correctly. Binds to ribosomes in a GTP-dependent manner. This chain is Elongation factor 4, found in Xanthomonas axonopodis pv. citri (strain 306).